The sequence spans 79 residues: UPF0180 protein Bcer98_1118 (79 aa).

Belongs to the UPF0180 family.

The sequence is that of UPF0180 protein Bcer98_1118 from Bacillus cytotoxicus (strain DSM 22905 / CIP 110041 / 391-98 / NVH 391-98).